The primary structure comprises 468 residues: Replication factor C large subunit (468 aa).

50-57 (GPPGSGKT) serves as a coordination point for ATP. The disordered stretch occupies residues 422-456 (EEKAVEEKVEEEEAEEEEEEERKEEEKPKAEKKKG). Residues 429-444 (KVEEEEAEEEEEEERK) are compositionally biased toward acidic residues.

The protein belongs to the activator 1 small subunits family. RfcL subfamily. In terms of assembly, heteromultimer composed of small subunits (RfcS) and large subunits (RfcL).

Functionally, part of the RFC clamp loader complex which loads the PCNA sliding clamp onto DNA. The polypeptide is Replication factor C large subunit (Pyrococcus horikoshii (strain ATCC 700860 / DSM 12428 / JCM 9974 / NBRC 100139 / OT-3)).